The chain runs to 123 residues: Small ribosomal subunit protein uS11 (123 aa).

Residues 1–22 (MAKKRKKKLSSPEGISHIHASA) are disordered.

Belongs to the universal ribosomal protein uS11 family. Part of the 30S ribosomal subunit. Interacts with proteins S7 and S18. Binds to IF-3.

Located on the platform of the 30S subunit, it bridges several disparate RNA helices of the 16S rRNA. Forms part of the Shine-Dalgarno cleft in the 70S ribosome. In Malacoplasma penetrans (strain HF-2) (Mycoplasma penetrans), this protein is Small ribosomal subunit protein uS11.